The chain runs to 382 residues: Probable purine permease 4 (382 aa).

The next 10 membrane-spanning stretches (helical) occupy residues 25–45 (LTLL…SSLL), 62–82 (WVQS…HYVL), 98–118 (LIFS…FSWG), 121–141 (YLPV…TLIL), 150–170 (ITFS…LLAL), 185–205 (YFIG…YLPV), 224–244 (LVME…EGGF), 260–280 (TFYW…SFAA), 291–311 (ITGG…GVVA), and 315–335 (VFGG…SSYT). An EamA domain is found at 66–170 (AGFPLLLILI…LTLSSVLLAL (105 aa)). The segment at 345–364 (EEKEKGEYSGVKTTEDSGEM) is disordered.

Belongs to the purine permeases (TC 2.A.7.14) family.

Its subcellular location is the membrane. This is Probable purine permease 4 (PUP4) from Arabidopsis thaliana (Mouse-ear cress).